The chain runs to 524 residues: Probable myosin-binding protein 5 (524 aa).

Residues 20–40 (FLIYALLEWILIIILFIDGFL) traverse the membrane as a helical segment. A GTD-binding domain is found at 299–397 (SILQHLNRQV…ELEAGIEVYR (99 aa)). A coiled-coil region spans residues 462 to 490 (SRKDMLVKEISEITERLNAIESKGELLQQ).

It localises to the membrane. Functionally, probable membrane-anchored myosin receptors. The sequence is that of Probable myosin-binding protein 5 from Arabidopsis thaliana (Mouse-ear cress).